We begin with the raw amino-acid sequence, 319 residues long: MDKVKHSKIIILGSGPAGYTAAIYAARANLDPFLITGTNKGGQLMNTNEIENWPGDYNKISGSELMNRMYKHAIELKTKVICDTVISVNFKKNPFFLIGENNKYTADSVIIATGANPRYLGLQSESLFKGKGVSTCAVCDGFFYKNKEVAVVGGGNTAIEETLYLSNFVKKVHLIHRGINFRAEKILLDRLEKKIKSQKIIIYLNSIVKNILGNSSGVTALLIEQKNSKEKTESKIQVSGLFVAIGYTPNTNIFVNKLKMKDGYIQVTRQEHGNYTQTSIPGIFAAGDVIDHVYRQAITSSASGCMAALDSERYINSLV.

FAD is bound at residue 36–43 (TGTNKGGQ). An intrachain disulfide couples C136 to C139. 288–297 (DVIDHVYRQA) lines the FAD pocket.

This sequence belongs to the class-II pyridine nucleotide-disulfide oxidoreductase family. As to quaternary structure, homodimer. FAD is required as a cofactor.

The protein localises to the cytoplasm. The catalysed reaction is [thioredoxin]-dithiol + NADP(+) = [thioredoxin]-disulfide + NADPH + H(+). The protein is Thioredoxin reductase (trxB) of Buchnera aphidicola subsp. Acyrthosiphon pisum (strain APS) (Acyrthosiphon pisum symbiotic bacterium).